The following is a 235-amino-acid chain: MSVISMKQLLEAGVHFGHQTRRWNPKMKKYIFTERNGIYIIDLQKTVKKVEEAYNFVRELAGNGGKILFVGTKKQAQESVKEEAERCGMFYVNQRWLGGTLTNFATIQKRIKRLREIEKMEEDGVFDVLPKKEVIGLKKEKERLEKFLGGIKDMKELPDALFVIDPRKERIAVAEARKLNIPIIGIVDTNCDPDEIDYVIPANDDAIRAVKLLTSKIADAVLEAKQGEEAAVAAE.

It belongs to the universal ribosomal protein uS2 family.

The polypeptide is Small ribosomal subunit protein uS2 (Geobacillus thermodenitrificans (strain NG80-2)).